A 55-amino-acid chain; its full sequence is MAKAATIKIKLLSTADTGFFYVTKKNSRTMTNKMSKRKYDPVVKRHVEFKETKIK.

This sequence belongs to the bacterial ribosomal protein bL33 family.

This chain is Large ribosomal subunit protein bL33, found in Bartonella quintana (strain Toulouse) (Rochalimaea quintana).